We begin with the raw amino-acid sequence, 605 residues long: Elongation factor 4 (605 aa).

The 183-residue stretch at 4–186 (SSVRNFCIIA…AIVNKVPAPK (183 aa)) folds into the tr-type G domain. GTP contacts are provided by residues 16-21 (DHGKST) and 133-136 (NKID).

It belongs to the TRAFAC class translation factor GTPase superfamily. Classic translation factor GTPase family. LepA subfamily.

It is found in the cell membrane. It carries out the reaction GTP + H2O = GDP + phosphate + H(+). Its function is as follows. Required for accurate and efficient protein synthesis under certain stress conditions. May act as a fidelity factor of the translation reaction, by catalyzing a one-codon backward translocation of tRNAs on improperly translocated ribosomes. Back-translocation proceeds from a post-translocation (POST) complex to a pre-translocation (PRE) complex, thus giving elongation factor G a second chance to translocate the tRNAs correctly. Binds to ribosomes in a GTP-dependent manner. The polypeptide is Elongation factor 4 (Dehalococcoides mccartyi (strain ATCC BAA-2100 / JCM 16839 / KCTC 5957 / BAV1)).